Here is a 222-residue protein sequence, read N- to C-terminus: Probable transaldolase (222 aa).

The active-site Schiff-base intermediate with substrate is the K91.

It belongs to the transaldolase family. Type 3B subfamily.

Its subcellular location is the cytoplasm. It carries out the reaction D-sedoheptulose 7-phosphate + D-glyceraldehyde 3-phosphate = D-erythrose 4-phosphate + beta-D-fructose 6-phosphate. The protein operates within carbohydrate degradation; pentose phosphate pathway; D-glyceraldehyde 3-phosphate and beta-D-fructose 6-phosphate from D-ribose 5-phosphate and D-xylulose 5-phosphate (non-oxidative stage): step 2/3. Transaldolase is important for the balance of metabolites in the pentose-phosphate pathway. This Chlorobium luteolum (strain DSM 273 / BCRC 81028 / 2530) (Pelodictyon luteolum) protein is Probable transaldolase.